Consider the following 366-residue polypeptide: Anhydro-N-acetylmuramic acid kinase (366 aa).

12 to 19 lines the ATP pocket; that stretch reads GTSMDGAD.

Belongs to the anhydro-N-acetylmuramic acid kinase family.

The catalysed reaction is 1,6-anhydro-N-acetyl-beta-muramate + ATP + H2O = N-acetyl-D-muramate 6-phosphate + ADP + H(+). The protein operates within amino-sugar metabolism; 1,6-anhydro-N-acetylmuramate degradation. Its pathway is cell wall biogenesis; peptidoglycan recycling. Catalyzes the specific phosphorylation of 1,6-anhydro-N-acetylmuramic acid (anhMurNAc) with the simultaneous cleavage of the 1,6-anhydro ring, generating MurNAc-6-P. Is required for the utilization of anhMurNAc either imported from the medium or derived from its own cell wall murein, and thus plays a role in cell wall recycling. The sequence is that of Anhydro-N-acetylmuramic acid kinase from Neisseria meningitidis serogroup C (strain 053442).